The following is a 193-amino-acid chain: dCTP deaminase (193 aa).

DCTP contacts are provided by residues 110–115 (RSSLAR), aspartate 128, 136–138 (VLE), tyrosine 171, lysine 178, and glutamine 182. Glutamate 138 functions as the Proton donor/acceptor in the catalytic mechanism.

The protein belongs to the dCTP deaminase family. In terms of assembly, homotrimer.

The enzyme catalyses dCTP + H2O + H(+) = dUTP + NH4(+). The protein operates within pyrimidine metabolism; dUMP biosynthesis; dUMP from dCTP (dUTP route): step 1/2. Its function is as follows. Catalyzes the deamination of dCTP to dUTP. This Buchnera aphidicola subsp. Baizongia pistaciae (strain Bp) protein is dCTP deaminase.